A 122-amino-acid chain; its full sequence is Large ribosomal subunit protein bL19 (122 aa).

Belongs to the bacterial ribosomal protein bL19 family.

Functionally, this protein is located at the 30S-50S ribosomal subunit interface and may play a role in the structure and function of the aminoacyl-tRNA binding site. The sequence is that of Large ribosomal subunit protein bL19 from Mycoplasmoides gallisepticum (strain R(low / passage 15 / clone 2)) (Mycoplasma gallisepticum).